The chain runs to 414 residues: Sec-independent protein translocase protein TatC (414 aa).

A disordered region spans residues 1 to 21 (MTQSTSVSKGGRVSRKAKKNP). 6 helical membrane passes run 45–65 (IAVTTIIGFIWYEHGIPAWAI), 119–139 (GGLAGLVMACPIWLIEIWRFI), 157–177 (IAGFLFVLGVVAAYLVLPMGL), 200–220 (FVIALILVFGLSFEVPLFTAM), 238–258 (IMIVVIFIFAAIATPGQDPIS), and 259–279 (MLVLALTLVVLMELALQFTRI). Positions 315–414 (IYDGDHKGIA…IQSSSFDDVL (100 aa)) are disordered. Positions 323-336 (IAGGGDAHPAGGSG) are enriched in gly residues. Low complexity predominate over residues 345-357 (TAPTRAPSASESP). The span at 403–414 (DTIQSSSFDDVL) shows a compositional bias: polar residues.

It belongs to the TatC family. In terms of assembly, the Tat system comprises two distinct complexes: a TatABC complex, containing multiple copies of TatA, TatB and TatC subunits, and a separate TatA complex, containing only TatA subunits. Substrates initially bind to the TatABC complex, which probably triggers association of the separate TatA complex to form the active translocon.

It is found in the cell membrane. Its function is as follows. Part of the twin-arginine translocation (Tat) system that transports large folded proteins containing a characteristic twin-arginine motif in their signal peptide across membranes. Together with TatB, TatC is part of a receptor directly interacting with Tat signal peptides. The polypeptide is Sec-independent protein translocase protein TatC (Corynebacterium kroppenstedtii (strain DSM 44385 / JCM 11950 / CIP 105744 / CCUG 35717)).